The sequence spans 271 residues: Mannosyl-3-phosphoglycerate phosphatase (271 aa).

The active-site Nucleophile is the aspartate 13. Residues aspartate 13, aspartate 15, and aspartate 214 each coordinate Mg(2+).

Belongs to the HAD-like hydrolase superfamily. MPGP family. The cofactor is Mg(2+).

The protein localises to the cytoplasm. The catalysed reaction is 2-O-(alpha-D-mannosyl)-3-phosphoglycerate + H2O = (2R)-2-O-(alpha-D-mannosyl)-glycerate + phosphate. The chain is Mannosyl-3-phosphoglycerate phosphatase (yedP) from Shigella dysenteriae serotype 1 (strain Sd197).